Reading from the N-terminus, the 661-residue chain is MNNFSIISEYKPAGDQPKAIDEIIAGLNSKKRSQMLLGITGSGKTFTMANIIERTNRPTLIMAHNKTLAAQIYSEMKSIFPKNAVEYFVSYYDYYQPEAYIARTDTFIEKDSSINEQIDLMRHSATRSLLERRDVIVVSSVSCIYGLGSPDLYYQMTVNLEPGKSYPRDKLLNDLINLQYERNDIGFERGCFRVKGDNIDIFPSHYSDKAWRLSFFGNELEYIHEFDPLTGEKLAKLDKAMVFGNSHFVMPQETVNSAISGIEEELQKRLEFLKSQDKPLETQRLNQRTQYDLEMLTETGSCKGVENYSRFFTGRNAGEPPPTLFEYLPEDALLFVDESHVSVPQIRAMYNGDRARKEVLVEHGFRLPSALDNRPLKFEEWEKFRPQTVFVSATPGPFELEETGDTVVELIIRPTGLLDPECIIKPATNQVEDLIGEIQATIAKGFRVLVTTLTKKMAEDLTAYLQELKYKTSYLHSNIHTLERIEILRDLRQGTIDILVGINLLREGLDIPECGLVAILDADKEGFLRSEVSLIQTIGRAARNSEGRVILYADKMTKSIDKAMSETSRRRQIQQEYNEKHGIIPKTINRAIHALAELEKVDSKLDKKQAHTLFDNPAKLKAHIEKLKKDMLKAASNLEFEQAAKLRDQLKTLEEAALELS.

Residues 25–414 (AGLNSKKRSQ…DTVVELIIRP (390 aa)) form the Helicase ATP-binding domain. 38-45 (GITGSGKT) serves as a coordination point for ATP. Positions 91 to 114 (YYDYYQPEAYIARTDTFIEKDSSI) match the Beta-hairpin motif. A Helicase C-terminal domain is found at 430 to 592 (QVEDLIGEIQ…IIPKTINRAI (163 aa)). In terms of domain architecture, UVR spans 621–656 (KAHIEKLKKDMLKAASNLEFEQAAKLRDQLKTLEEA).

This sequence belongs to the UvrB family. As to quaternary structure, forms a heterotetramer with UvrA during the search for lesions. Interacts with UvrC in an incision complex.

It is found in the cytoplasm. Functionally, the UvrABC repair system catalyzes the recognition and processing of DNA lesions. A damage recognition complex composed of 2 UvrA and 2 UvrB subunits scans DNA for abnormalities. Upon binding of the UvrA(2)B(2) complex to a putative damaged site, the DNA wraps around one UvrB monomer. DNA wrap is dependent on ATP binding by UvrB and probably causes local melting of the DNA helix, facilitating insertion of UvrB beta-hairpin between the DNA strands. Then UvrB probes one DNA strand for the presence of a lesion. If a lesion is found the UvrA subunits dissociate and the UvrB-DNA preincision complex is formed. This complex is subsequently bound by UvrC and the second UvrB is released. If no lesion is found, the DNA wraps around the other UvrB subunit that will check the other stand for damage. The polypeptide is UvrABC system protein B (Rickettsia felis (strain ATCC VR-1525 / URRWXCal2) (Rickettsia azadi)).